Consider the following 304-residue polypeptide: D-alanine--D-alanine ligase (304 aa).

In terms of domain architecture, ATP-grasp spans 103–299 (KLIWQALGLP…FADLCIEILK (197 aa)). Position 129 to 184 (129 to 184 (EEKLGLPMFVKPAAEGSSVGVVKVKEKGRLKSVYEELKHLQGEIIAERFIGGGEYS)) interacts with ATP. Mg(2+)-binding residues include Asp253, Glu266, and Asn268.

The protein belongs to the D-alanine--D-alanine ligase family. It depends on Mg(2+) as a cofactor. Requires Mn(2+) as cofactor.

It is found in the cytoplasm. The enzyme catalyses 2 D-alanine + ATP = D-alanyl-D-alanine + ADP + phosphate + H(+). The protein operates within cell wall biogenesis; peptidoglycan biosynthesis. Its function is as follows. Cell wall formation. The sequence is that of D-alanine--D-alanine ligase from Neisseria gonorrhoeae (strain ATCC 700825 / FA 1090).